Consider the following 463-residue polypeptide: Type IV secretion system protein PtlD (463 aa).

The N-terminal stretch at 1–24 (MAGLSRILLSCTLACLLAGQAAQA) is a signal peptide. Helical transmembrane passes span 118-138 (LQPL…YALL), 232-252 (WLLC…LAAS), 253-273 (LLIV…LFLV), 294-314 (ALVF…VLAG), and 333-353 (MLAA…VPLA). A compositionally biased stretch (low complexity) spans 376–410 (AHRQAAARQYAPRPAAAAAAAGPHQAGTYAASATP). Residues 376–463 (AHRQAAARQY…RVLPRKPNLP (88 aa)) form a disordered region. The segment covering 411-420 (APAPARPAPS) has biased composition (pro residues). The span at 441-455 (VRRDDRPAPAPDRRV) shows a compositional bias: basic and acidic residues.

It is found in the cell membrane. Functionally, component of the type IV secretion system ptl required for secretion of assembled pertussis toxin (PTX) through the outer membrane. This Bordetella pertussis (strain Tohama I / ATCC BAA-589 / NCTC 13251) protein is Type IV secretion system protein PtlD (ptlD).